The following is a 259-amino-acid chain: Deoxyribose-phosphate aldolase (259 aa).

Aspartate 102 functions as the Proton donor/acceptor in the catalytic mechanism. Lysine 167 functions as the Schiff-base intermediate with acetaldehyde in the catalytic mechanism. Lysine 201 acts as the Proton donor/acceptor in catalysis.

It belongs to the DeoC/FbaB aldolase family. DeoC type 2 subfamily.

It localises to the cytoplasm. The catalysed reaction is 2-deoxy-D-ribose 5-phosphate = D-glyceraldehyde 3-phosphate + acetaldehyde. Its pathway is carbohydrate degradation; 2-deoxy-D-ribose 1-phosphate degradation; D-glyceraldehyde 3-phosphate and acetaldehyde from 2-deoxy-alpha-D-ribose 1-phosphate: step 2/2. In terms of biological role, catalyzes a reversible aldol reaction between acetaldehyde and D-glyceraldehyde 3-phosphate to generate 2-deoxy-D-ribose 5-phosphate. The chain is Deoxyribose-phosphate aldolase from Escherichia fergusonii (strain ATCC 35469 / DSM 13698 / CCUG 18766 / IAM 14443 / JCM 21226 / LMG 7866 / NBRC 102419 / NCTC 12128 / CDC 0568-73).